Consider the following 348-residue polypeptide: Photosystem II protein D1 (348 aa).

The next 3 helical transmembrane spans lie at 33–50, 122–137, and 146–160; these read YIGW…LATV, HFIF…EWEF, and WIFV…AASA. H122 contacts chlorophyll a. Residue Y130 participates in pheophytin a binding. The [CaMn4O5] cluster site is built by D174 and E193. Residues 201–222 form a helical membrane-spanning segment; the sequence is FHILGVAAVFGGSLFSAMHGSL. H202 provides a ligand contact to chlorophyll a. A quinone is bound by residues H219 and 268 to 269; that span reads SF. Position 219 (H219) interacts with Fe cation. H276 serves as a coordination point for Fe cation. The chain crosses the membrane as a helical span at residues 278–292; the sequence is FLAAWPVIGIWFTSL. 4 residues coordinate [CaMn4O5] cluster: H336, E337, D346, and A348.

This sequence belongs to the reaction center PufL/M/PsbA/D family. PSII is composed of 1 copy each of membrane proteins PsbA, PsbB, PsbC, PsbD, PsbE, PsbF, PsbH, PsbI, PsbJ, PsbK, PsbL, PsbM, PsbT, PsbX, PsbY, PsbZ, Psb30/Ycf12, at least 3 peripheral proteins of the oxygen-evolving complex and a large number of cofactors. It forms dimeric complexes. The D1/D2 heterodimer binds P680, chlorophylls that are the primary electron donor of PSII, and subsequent electron acceptors. It shares a non-heme iron and each subunit binds pheophytin, quinone, additional chlorophylls, carotenoids and lipids. D1 provides most of the ligands for the Mn4-Ca-O5 cluster of the oxygen-evolving complex (OEC). There is also a Cl(-1) ion associated with D1 and D2, which is required for oxygen evolution. The PSII complex binds additional chlorophylls, carotenoids and specific lipids. is required as a cofactor. In terms of processing, tyr-165 forms a radical intermediate that is referred to as redox-active TyrZ, YZ or Y-Z.

The protein localises to the plastid. It localises to the chloroplast thylakoid membrane. The enzyme catalyses 2 a plastoquinone + 4 hnu + 2 H2O = 2 a plastoquinol + O2. Functionally, photosystem II (PSII) is a light-driven water:plastoquinone oxidoreductase that uses light energy to abstract electrons from H(2)O, generating O(2) and a proton gradient subsequently used for ATP formation. It consists of a core antenna complex that captures photons, and an electron transfer chain that converts photonic excitation into a charge separation. The D1/D2 (PsbA/PsbD) reaction center heterodimer binds P680, the primary electron donor of PSII as well as several subsequent electron acceptors. The protein is Photosystem II protein D1 of Heterocapsa triquetra (Dinoflagellate).